An 892-amino-acid polypeptide reads, in one-letter code: DNA mismatch repair protein MutS (892 aa).

The interval 663 to 684 is disordered; the sequence is TNTSLREAAPTTTLSTSDQGQM. An ATP-binding site is contributed by 696–703; sequence GPNASGKS.

The protein belongs to the DNA mismatch repair MutS family.

In terms of biological role, this protein is involved in the repair of mismatches in DNA. It is possible that it carries out the mismatch recognition step. This protein has a weak ATPase activity. This chain is DNA mismatch repair protein MutS, found in Nostoc punctiforme (strain ATCC 29133 / PCC 73102).